The sequence spans 206 residues: GTP cyclohydrolase 1 (206 aa).

Positions 95, 98, and 166 each coordinate Zn(2+).

It belongs to the GTP cyclohydrolase I family. In terms of assembly, toroid-shaped homodecamer, composed of two pentamers of five dimers.

It carries out the reaction GTP + H2O = 7,8-dihydroneopterin 3'-triphosphate + formate + H(+). It participates in cofactor biosynthesis; 7,8-dihydroneopterin triphosphate biosynthesis; 7,8-dihydroneopterin triphosphate from GTP: step 1/1. In Bartonella bacilliformis (strain ATCC 35685 / KC583 / Herrer 020/F12,63), this protein is GTP cyclohydrolase 1.